We begin with the raw amino-acid sequence, 316 residues long: Acetaldehyde dehydrogenase (316 aa).

An NAD(+)-binding site is contributed by 11-14; that stretch reads SGNI. C131 (acyl-thioester intermediate) is an active-site residue. NAD(+)-binding positions include 162-170 and N289; that span reads SAGPGTRAN.

This sequence belongs to the acetaldehyde dehydrogenase family. As to quaternary structure, interacts with MhpE.

It carries out the reaction acetaldehyde + NAD(+) + CoA = acetyl-CoA + NADH + H(+). It participates in aromatic compound metabolism; 3-phenylpropanoate degradation. In terms of biological role, catalyzes the conversion of acetaldehyde to acetyl-CoA, using NAD(+) and coenzyme A. Is the final enzyme in the meta-cleavage pathway for the degradation of aromatic compounds. The protein is Acetaldehyde dehydrogenase of Klebsiella pneumoniae subsp. pneumoniae (strain ATCC 700721 / MGH 78578).